The following is a 128-amino-acid chain: uncharacterized protein (128 aa).

The span at 1 to 28 shows a compositional bias: basic and acidic residues; the sequence is MDADDFGKKDLENGNESPKKPIFMKDWK. Residues 1-30 are disordered; sequence MDADDFGKKDLENGNESPKKPIFMKDWKNS.

It is found in the cytoplasm. Its subcellular location is the nucleus. This is an uncharacterized protein from Schizosaccharomyces pombe (strain 972 / ATCC 24843) (Fission yeast).